Consider the following 439-residue polypeptide: Glucan 1,3-beta-glucosidase (439 aa).

Positions 1 to 18 (MLLSLLFLLSTFAFGALT) are cleaved as a signal peptide. E227 functions as the Proton donor in the catalytic mechanism. Disulfide bonds link C311/C437 and C336/C366. Catalysis depends on E328, which acts as the Nucleophile.

It belongs to the glycosyl hydrolase 5 (cellulase A) family.

The protein localises to the secreted. The catalysed reaction is Successive hydrolysis of beta-D-glucose units from the non-reducing ends of (1-&gt;3)-beta-D-glucans, releasing alpha-glucose.. Beta-glucanases participate in the metabolism of beta-glucan, the main structural component of the cell wall. It could also function biosynthetically as a transglycosylase. The protein is Glucan 1,3-beta-glucosidase (EXG1) of Lachancea kluyveri (strain ATCC 58438 / CBS 3082 / BCRC 21498 / NBRC 1685 / JCM 7257 / NCYC 543 / NRRL Y-12651) (Yeast).